Here is a 159-residue protein sequence, read N- to C-terminus: Phospholipase A2 AP-PLA2-I (159 aa).

The first 19 residues, 1 to 19 (MNFLVVIVTTVSLAGAASA), serve as a signal peptide directing secretion. The propeptide occupies 20 to 23 (GEIQ). 6 disulfide bridges follow: cysteine 51/cysteine 159, cysteine 53/cysteine 69, cysteine 68/cysteine 139, cysteine 75/cysteine 132, cysteine 85/cysteine 125, and cysteine 110/cysteine 130. Positions 52, 54, and 56 each coordinate Ca(2+). The active site involves histidine 72. Aspartate 73 contributes to the Ca(2+) binding site. Aspartate 133 is a catalytic residue.

It belongs to the phospholipase A2 family. Group I subfamily. Homodimer. Ca(2+) is required as a cofactor. In terms of tissue distribution, expressed by the venom gland.

Its subcellular location is the secreted. It catalyses the reaction a 1,2-diacyl-sn-glycero-3-phosphocholine + H2O = a 1-acyl-sn-glycero-3-phosphocholine + a fatty acid + H(+). Its function is as follows. Starfish phospholipase A2 (PLA2) that has hemorrhagic and capillary permeability-increasing activities and hence is considered to be deeply involved in the local inflammation. Shows hemolytic activity only in the presence of phosphatidylcholine (PC). PLA2 catalyzes the calcium-dependent hydrolysis of the 2-acyl groups in 3-sn-phosphoglycerides. The sequence is that of Phospholipase A2 AP-PLA2-I from Acanthaster planci (Crown-of-thorns starfish).